We begin with the raw amino-acid sequence, 140 residues long: Endoribonuclease YbeY (140 aa).

3 residues coordinate Zn(2+): H99, H103, and H109.

This sequence belongs to the endoribonuclease YbeY family. Requires Zn(2+) as cofactor.

The protein localises to the cytoplasm. In terms of biological role, single strand-specific metallo-endoribonuclease involved in late-stage 70S ribosome quality control and in maturation of the 3' terminus of the 16S rRNA. The protein is Endoribonuclease YbeY of Wolinella succinogenes (strain ATCC 29543 / DSM 1740 / CCUG 13145 / JCM 31913 / LMG 7466 / NCTC 11488 / FDC 602W) (Vibrio succinogenes).